The following is a 300-amino-acid chain: tRNA dimethylallyltransferase (300 aa).

Glycine 9 to serine 16 is an ATP binding site. Threonine 11–serine 16 contributes to the substrate binding site. The tract at residues aspartate 34–cysteine 37 is interaction with substrate tRNA.

Belongs to the IPP transferase family. Monomer. It depends on Mg(2+) as a cofactor.

It catalyses the reaction adenosine(37) in tRNA + dimethylallyl diphosphate = N(6)-dimethylallyladenosine(37) in tRNA + diphosphate. Functionally, catalyzes the transfer of a dimethylallyl group onto the adenine at position 37 in tRNAs that read codons beginning with uridine, leading to the formation of N6-(dimethylallyl)adenosine (i(6)A). This is tRNA dimethylallyltransferase from Campylobacter fetus subsp. fetus (strain 82-40).